The sequence spans 400 residues: Elongation factor Tu 2 (400 aa).

A tr-type G domain is found at 10–209 (KPHLNIGTIG…AVDSYIPLPQ (200 aa)). A G1 region spans residues 19 to 26 (GHIDHGKT). Residue 19–26 (GHIDHGKT) participates in GTP binding. Residue Thr-26 coordinates Mg(2+). Residues 60–64 (GITIN) form a G2 region. The interval 81–84 (DCPG) is G3. GTP is bound by residues 81–85 (DCPGH) and 136–139 (NKID). The interval 136–139 (NKID) is G4. Positions 174 to 176 (SAL) are G5.

It belongs to the TRAFAC class translation factor GTPase superfamily. Classic translation factor GTPase family. EF-Tu/EF-1A subfamily. Monomer.

It localises to the cytoplasm. The catalysed reaction is GTP + H2O = GDP + phosphate + H(+). In terms of biological role, GTP hydrolase that promotes the GTP-dependent binding of aminoacyl-tRNA to the A-site of ribosomes during protein biosynthesis. The chain is Elongation factor Tu 2 from Syntrophomonas wolfei subsp. wolfei (strain DSM 2245B / Goettingen).